Reading from the N-terminus, the 210-residue chain is S-norcoclaurine synthase (210 aa).

A signal peptide spans methionine 1–cysteine 19. A dopamine-binding site is contributed by tyrosine 108–glutamate 110. Catalysis depends on lysine 122, which acts as the Proton donor. A (4-hydroxyphenyl)acetaldehyde-binding site is contributed by aspartate 141.

It belongs to the BetVI family. Concentration-dependent dimerization, but mainly monomeric at concentrations around 10 uM. As to expression, expressed most abundantly in the rhizomes and to a lesser extent in petioles, roots, leaves and flower buds.

The catalysed reaction is (4-hydroxyphenyl)acetaldehyde + dopamine = (S)-norcoclaurine + H2O. Involved in the biosynthesis of the common precursor of all benzylisoquinoline alkaloids such as morphine, sanguinarine, codeine or berberine. Condenses dopamine and 4-hydroxyphenylacetaldehyde. This Thalictrum flavum subsp. glaucum (Yellow meadow rue) protein is S-norcoclaurine synthase.